The chain runs to 95 residues: Aspartyl/glutamyl-tRNA(Asn/Gln) amidotransferase subunit C (95 aa).

The protein belongs to the GatC family. As to quaternary structure, heterotrimer of A, B and C subunits.

The catalysed reaction is L-glutamyl-tRNA(Gln) + L-glutamine + ATP + H2O = L-glutaminyl-tRNA(Gln) + L-glutamate + ADP + phosphate + H(+). It carries out the reaction L-aspartyl-tRNA(Asn) + L-glutamine + ATP + H2O = L-asparaginyl-tRNA(Asn) + L-glutamate + ADP + phosphate + 2 H(+). Allows the formation of correctly charged Asn-tRNA(Asn) or Gln-tRNA(Gln) through the transamidation of misacylated Asp-tRNA(Asn) or Glu-tRNA(Gln) in organisms which lack either or both of asparaginyl-tRNA or glutaminyl-tRNA synthetases. The reaction takes place in the presence of glutamine and ATP through an activated phospho-Asp-tRNA(Asn) or phospho-Glu-tRNA(Gln). This Thermodesulfovibrio yellowstonii (strain ATCC 51303 / DSM 11347 / YP87) protein is Aspartyl/glutamyl-tRNA(Asn/Gln) amidotransferase subunit C.